The chain runs to 257 residues: V-type proton ATPase subunit D (257 aa).

The disordered stretch occupies residues 211–233 (KKKDLKAKEAQKEENSANKTIME). Over residues 216-226 (KAKEAQKEENS) the composition is skewed to basic and acidic residues.

The protein belongs to the V-ATPase D subunit family. In terms of assembly, V-ATPase is a heteromultimeric enzyme composed of a peripheral catalytic V1 complex (components A to H) attached to an integral membrane V0 proton pore complex (components: a, c, c', c'' and d).

Its function is as follows. Subunit of the peripheral V1 complex of vacuolar ATPase. Vacuolar ATPase is responsible for acidifying a variety of intracellular compartments in eukaryotic cells, thus providing most of the energy required for transport processes in the vacuolar system. In Dictyostelium discoideum (Social amoeba), this protein is V-type proton ATPase subunit D (atp6v1d).